Here is a 201-residue protein sequence, read N- to C-terminus: Recombination protein RecR (201 aa).

The segment at 60–75 (CKYCQSLTEKDVCDIC) adopts a C4-type zinc-finger fold. The Toprim domain occupies 83–177 (SKLCIIESML…KISRIGFGVP (95 aa)).

Belongs to the RecR family.

Its function is as follows. May play a role in DNA repair. It seems to be involved in an RecBC-independent recombinational process of DNA repair. It may act with RecF and RecO. The polypeptide is Recombination protein RecR (Francisella philomiragia subsp. philomiragia (strain ATCC 25017 / CCUG 19701 / FSC 153 / O#319-036)).